A 394-amino-acid chain; its full sequence is Maltose permease (394 aa).

Over 1-11 the chain is Cytoplasmic; it reads MGAAFKWGAAA. Residues 12–38 traverse the membrane as a helical segment; the sequence is RKTVFPLFYFLIFFAFGALFPLLSVYL. Residues 39-45 lie on the Extracellular side of the membrane; it reads QEEARLS. The helical transmembrane segment at 46 to 74 threads the bilayer; it reads GAAIGWIMSLPPIVTMAAQPLWGTAADYT. Residues 75–78 are Cytoplasmic-facing; it reads RKPV. Residues 79–104 form a helical membrane-spanning segment; the sequence is GLLLAALVLAALFGVMYALAGSYRLF. Over 105-108 the chain is Extracellular; it reads VVLT. The chain crosses the membrane as a helical span at residues 109-126; the sequence is VLLSAMQSAIVPLSDSLA. The Cytoplasmic portion of the chain corresponds to 127–137; sequence LRHVHEQGGNY. A helical membrane pass occupies residues 138-160; that stretch reads GAIRLWGSLGFAMAVLAVGWLSD. Residues 161–163 are Extracellular-facing; the sequence is HIA. Residues 164–183 form a helical membrane-spanning segment; that stretch reads FAVIFYAFSLALLTAAALAT. Topologically, residues 184-213 are cytoplasmic; the sequence is RLPRYPMGAPGALTRQDVRGLLASRPFRLL. A helical membrane pass occupies residues 214 to 233; the sequence is LVATFLLFGPILANNSYFGL. The Extracellular segment spans residues 234 to 237; it reads LIHE. The helical transmembrane segment at 238 to 262 threads the bilayer; that stretch reads LGGTLTGIGLAFLFAAGSEAPFMKA. The Cytoplasmic portion of the chain corresponds to 263–272; sequence ADRLIGRFGM. The chain crosses the membrane as a helical span at residues 273–292; it reads VRLLLLAALISAARWLAYAA. Topologically, residues 293–295 are extracellular; the sequence is DPP. Residues 296–318 form a helical membrane-spanning segment; that stretch reads LWFVYMTTVVQGCSVGLAIPTAL. Residues 319–330 lie on the Cytoplasmic side of the membrane; the sequence is QYARRLAPERVQ. A helical transmembrane segment spans residues 331-358; the sequence is STAVALYSAVGNGLGAWFCTLVGGYLLE. Over 359 to 361 the chain is Extracellular; the sequence is RWQ. Residues 362 to 382 traverse the membrane as a helical segment; that stretch reads IGAVYLFFSICTIVGVLVLLL. The Cytoplasmic segment spans residues 383–394; that stretch reads LAKRERTAGEEK.

The protein belongs to the major facilitator superfamily.

The protein resides in the cell membrane. In terms of biological role, high affinity transport of maltose. The sequence is that of Maltose permease (malA) from Geobacillus stearothermophilus (Bacillus stearothermophilus).